The sequence spans 97 residues: MQKSEGFRSGTRYKLKKHPRAKGLYPITRALKQFENGQTVHVILDPSVQKGMPHPKFHGKTGKIIGQRGSSFIVEVKDGHATKEIIARPQHLRECKN.

This sequence belongs to the eukaryotic ribosomal protein eL21 family.

This chain is Large ribosomal subunit protein eL21, found in Methanococcus aeolicus (strain ATCC BAA-1280 / DSM 17508 / OCM 812 / Nankai-3).